The chain runs to 979 residues: Putative disease resistance protein RGA1 (979 aa).

Residues 143–437 enclose the NB-ARC domain; the sequence is GSVLTEPQVY…MAHGFLLSKG (295 aa). 182 to 189 is an ATP binding site; it reads GMGGLGKT. LRR repeat units lie at residues 524–547, 549–570, 571–594, 595–619, 637–661, 748–773, 823–841, 842–866, 868–890, 891–915, 917–939, and 940–965; these read FVSLRVLNLRNSNLNQLPSSIGDL, HLRYLDLSGNFRIRNLPKRLCK, LQNLQTLDLHYCDSLSCLPKQTSK, LGSLRNLLLDGCSLTSTPPRIGLLT, LGELKNLNLYGSISITKLDRVKKDT, LPCLESLELHTGSADVEYVEDNVHPG, VKTLKVIVTDATVLRSISN, LRALTSLDISDNVEATSLPEEMFKS, ANLKYLKISFFRNLKELPTSLAS, LNALKSLKFEFCDALESLPEEGVKG, TSLTELSVSNCMMLKCLPEGLQH, and LTALTTLTITQCPIVFKRCERGIGED.

It belongs to the disease resistance NB-LRR family.

Its function is as follows. Disease resistance protein. Resistance proteins guard the plant against pathogens that contain an appropriate avirulence protein via a direct or indirect interaction with this avirulence protein. That triggers a defense system which restricts the pathogen growth. The polypeptide is Putative disease resistance protein RGA1 (RGA1) (Solanum bulbocastanum (Wild potato)).